The primary structure comprises 359 residues: Probable dual-specificity RNA methyltransferase RlmN (359 aa).

The active-site Proton acceptor is the Glu-100. The Radical SAM core domain occupies 106–340; it reads TDKRLTVCVS…VSVRASRGRD (235 aa). A disulfide bridge links Cys-113 with Cys-345. Positions 120, 124, and 127 each coordinate [4Fe-4S] cluster. S-adenosyl-L-methionine-binding positions include 167–168, Ser-197, 226–228, and Asn-302; these read GE and SLH. Cys-345 acts as the S-methylcysteine intermediate in catalysis.

Belongs to the radical SAM superfamily. RlmN family. It depends on [4Fe-4S] cluster as a cofactor.

It is found in the cytoplasm. It carries out the reaction adenosine(2503) in 23S rRNA + 2 reduced [2Fe-2S]-[ferredoxin] + 2 S-adenosyl-L-methionine = 2-methyladenosine(2503) in 23S rRNA + 5'-deoxyadenosine + L-methionine + 2 oxidized [2Fe-2S]-[ferredoxin] + S-adenosyl-L-homocysteine. The catalysed reaction is adenosine(37) in tRNA + 2 reduced [2Fe-2S]-[ferredoxin] + 2 S-adenosyl-L-methionine = 2-methyladenosine(37) in tRNA + 5'-deoxyadenosine + L-methionine + 2 oxidized [2Fe-2S]-[ferredoxin] + S-adenosyl-L-homocysteine. In terms of biological role, specifically methylates position 2 of adenine 2503 in 23S rRNA and position 2 of adenine 37 in tRNAs. This Prochlorococcus marinus (strain NATL1A) protein is Probable dual-specificity RNA methyltransferase RlmN.